Consider the following 1032-residue polypeptide: Putative oxidoreductase YgfK (1032 aa).

The 4Fe-4S ferredoxin-type domain maps to 928–958 (RFQTLHLDAYCNECGNCAQFCPWNGKPYKDK). Residues Cys938, Cys941, Cys944, and Cys948 each contribute to the [4Fe-4S] cluster site.

The cofactor is [4Fe-4S] cluster.

Its function is as follows. Could be an iron-sulfur flavoprotein with NADPH:O(2) oxidoreductase activity. The sequence is that of Putative oxidoreductase YgfK (ygfK) from Escherichia coli (strain K12).